Here is a 202-residue protein sequence, read N- to C-terminus: NADH-quinone oxidoreductase subunit B (202 aa).

A compositionally biased stretch (polar residues) spans 1 to 13; that stretch reads MSSPTTKFSNAAS. The tract at residues 1–32 is disordered; it reads MSSPTTKFSNAASSAGGPRVTPAAASILDPRT. Positions 81, 82, 146, and 176 each coordinate [4Fe-4S] cluster.

It belongs to the complex I 20 kDa subunit family. In terms of assembly, NDH-1 is composed of 14 different subunits. Subunits NuoB, C, D, E, F, and G constitute the peripheral sector of the complex. The cofactor is [4Fe-4S] cluster.

It is found in the cell inner membrane. It carries out the reaction a quinone + NADH + 5 H(+)(in) = a quinol + NAD(+) + 4 H(+)(out). In terms of biological role, NDH-1 shuttles electrons from NADH, via FMN and iron-sulfur (Fe-S) centers, to quinones in the respiratory chain. The immediate electron acceptor for the enzyme in this species is believed to be ubiquinone. Couples the redox reaction to proton translocation (for every two electrons transferred, four hydrogen ions are translocated across the cytoplasmic membrane), and thus conserves the redox energy in a proton gradient. This chain is NADH-quinone oxidoreductase subunit B, found in Nitrobacter hamburgensis (strain DSM 10229 / NCIMB 13809 / X14).